The chain runs to 427 residues: Tyrosine--tRNA ligase (427 aa).

Y33 provides a ligand contact to L-tyrosine. The 'HIGH' region signature appears at 38-47; it reads PTASSLTIGN. L-tyrosine-binding residues include Y168 and Q172. The short motif at 228-232 is the 'KMSKS' region element; that stretch reads KFGKS. K231 serves as a coordination point for ATP. Residues 361 to 427 enclose the S4 RNA-binding domain; sequence LDLLSTLTNS…KKNYYLLRFN (67 aa).

This sequence belongs to the class-I aminoacyl-tRNA synthetase family. TyrS type 1 subfamily. Homodimer.

It localises to the cytoplasm. It catalyses the reaction tRNA(Tyr) + L-tyrosine + ATP = L-tyrosyl-tRNA(Tyr) + AMP + diphosphate + H(+). Its function is as follows. Catalyzes the attachment of tyrosine to tRNA(Tyr) in a two-step reaction: tyrosine is first activated by ATP to form Tyr-AMP and then transferred to the acceptor end of tRNA(Tyr). The protein is Tyrosine--tRNA ligase of Cytophaga hutchinsonii (strain ATCC 33406 / DSM 1761 / CIP 103989 / NBRC 15051 / NCIMB 9469 / D465).